The following is a 154-amino-acid chain: Deoxyuridine 5'-triphosphate nucleotidohydrolase (154 aa).

Substrate contacts are provided by residues 64–66 (RSG), N77, 81–83 (TID), and K91.

The protein belongs to the dUTPase family. Homotrimer. It depends on Mg(2+) as a cofactor.

It catalyses the reaction dUTP + H2O = dUMP + diphosphate + H(+). It participates in pyrimidine metabolism; dUMP biosynthesis; dUMP from dCTP (dUTP route): step 2/2. Its function is as follows. This enzyme is involved in nucleotide metabolism: it produces dUMP, the immediate precursor of thymidine nucleotides and it decreases the intracellular concentration of dUTP so that uracil cannot be incorporated into DNA. The protein is Deoxyuridine 5'-triphosphate nucleotidohydrolase of Mycobacterium bovis (strain BCG / Pasteur 1173P2).